Consider the following 179-residue polypeptide: Peptidyl-prolyl cis-trans isomerase H (179 aa).

The PPIase cyclophilin-type domain occupies 16–178; the sequence is FFDISIGDTP…LQVRIAECGE (163 aa).

The protein belongs to the cyclophilin-type PPIase family. PPIase H subfamily.

It is found in the nucleus. It carries out the reaction [protein]-peptidylproline (omega=180) = [protein]-peptidylproline (omega=0). PPIases accelerate the folding of proteins. It catalyzes the cis-trans isomerization of proline imidic peptide bonds in oligopeptides. The polypeptide is Peptidyl-prolyl cis-trans isomerase H (CYP3) (Cryptococcus neoformans var. neoformans serotype D (strain B-3501A) (Filobasidiella neoformans)).